The following is a 374-amino-acid chain: Peptide chain release factor 2 (374 aa).

Position 250 is an N5-methylglutamine (Gln-250).

The protein belongs to the prokaryotic/mitochondrial release factor family. Post-translationally, methylated by PrmC. Methylation increases the termination efficiency of RF2.

It is found in the cytoplasm. Functionally, peptide chain release factor 2 directs the termination of translation in response to the peptide chain termination codons UGA and UAA. The polypeptide is Peptide chain release factor 2 (Roseobacter denitrificans (strain ATCC 33942 / OCh 114) (Erythrobacter sp. (strain OCh 114))).